The following is a 418-amino-acid chain: 3-isopropylmalate dehydratase large subunit 1 (418 aa).

[4Fe-4S] cluster-binding residues include cysteine 298, cysteine 358, and cysteine 361.

Belongs to the aconitase/IPM isomerase family. LeuC type 2 subfamily. As to quaternary structure, heterodimer of LeuC and LeuD. The cofactor is [4Fe-4S] cluster.

It carries out the reaction (2R,3S)-3-isopropylmalate = (2S)-2-isopropylmalate. Its pathway is amino-acid biosynthesis; L-leucine biosynthesis; L-leucine from 3-methyl-2-oxobutanoate: step 2/4. In terms of biological role, catalyzes the isomerization between 2-isopropylmalate and 3-isopropylmalate, via the formation of 2-isopropylmaleate. This Thermotoga maritima (strain ATCC 43589 / DSM 3109 / JCM 10099 / NBRC 100826 / MSB8) protein is 3-isopropylmalate dehydratase large subunit 1.